Here is a 496-residue protein sequence, read N- to C-terminus: Transcription termination factor MTERF9, chloroplastic (496 aa).

A chloroplast-targeting transit peptide spans 1-44; the sequence is MAGFSLYCFKNPRILFTLPSESPLFVLGSDKCSPATRRPSRKTR. 2 disordered regions span residues 57 to 90 and 102 to 155; these read IINP…DDDW and YEKK…SWRL. Acidic residues predominate over residues 74–90; sequence DSDEDDDDDDDDDDDDW. Residues 105–123 are compositionally biased toward basic residues; sequence KKPKSHKQTIAKKSVKKGI. Residues 146 to 155 show a composition bias toward basic and acidic residues; it reads SEKKKESWRL.

This sequence belongs to the mTERF family.

The protein resides in the plastid. The protein localises to the chloroplast. Functionally, transcription termination factor required for processing and steady-state levels of plastid transcripts. May play a role in response to abiotic stresses. The protein is Transcription termination factor MTERF9, chloroplastic of Arabidopsis thaliana (Mouse-ear cress).